A 152-amino-acid chain; its full sequence is MTKERTFIAIKPDGVQRGYVSEIIGRFEKKGFKLVGLKQLIPSKDLAQNHYGVHRERPFFGDLVDFISSGPVVAMVWEGEGVILSARKLIGATKPLEAEPGTIRGDLAIDIGRNIIHGSDGEDTAKFEIDLWFNEEELCEWYTSDSKWRSEN.

Residues K11, F59, R87, T93, R104, and N114 each contribute to the ATP site. The active-site Pros-phosphohistidine intermediate is the H117.

It belongs to the NDK family. As to quaternary structure, homotetramer. Mg(2+) is required as a cofactor.

The protein resides in the cytoplasm. The catalysed reaction is a 2'-deoxyribonucleoside 5'-diphosphate + ATP = a 2'-deoxyribonucleoside 5'-triphosphate + ADP. The enzyme catalyses a ribonucleoside 5'-diphosphate + ATP = a ribonucleoside 5'-triphosphate + ADP. Major role in the synthesis of nucleoside triphosphates other than ATP. The ATP gamma phosphate is transferred to the NDP beta phosphate via a ping-pong mechanism, using a phosphorylated active-site intermediate. This is Nucleoside diphosphate kinase from Prochlorococcus marinus (strain MIT 9312).